Here is a 130-residue protein sequence, read N- to C-terminus: Small ribosomal subunit protein uS9 (130 aa).

The protein belongs to the universal ribosomal protein uS9 family.

The sequence is that of Small ribosomal subunit protein uS9 from Teredinibacter turnerae (strain ATCC 39867 / T7901).